Here is a 79-residue protein sequence, read N- to C-terminus: MISKAIIKKVSIAPRKARLVVDLIRGKEIKVAKAILMFTPKSASSIVLKLLNSAEANLAQNINLKSNDFYISEVYVNEG.

This sequence belongs to the universal ribosomal protein uL22 family. In terms of assembly, part of the 50S ribosomal subunit.

This protein binds specifically to 23S rRNA; its binding is stimulated by other ribosomal proteins, e.g. L4, L17, and L20. It is important during the early stages of 50S assembly. It makes multiple contacts with different domains of the 23S rRNA in the assembled 50S subunit and ribosome. Functionally, the globular domain of the protein is located near the polypeptide exit tunnel on the outside of the subunit, while an extended beta-hairpin is found that lines the wall of the exit tunnel in the center of the 70S ribosome. This is Large ribosomal subunit protein uL22 (rplV) from Prunus armeniaca phytoplasma.